Here is a 273-residue protein sequence, read N- to C-terminus: Soluble P-type ATPase-like phosphatase (273 aa).

The 4-aspartylphosphate intermediate role is filled by aspartate 8.

The protein belongs to the cation transport ATPase (P-type) (TC 3.A.3) family. Type IB subfamily. Mg(2+) serves as cofactor.

Its activity is regulated as follows. Inhibited by orthovanadate. Most probably acts as a phosphatase in the cytosol. The protein is Soluble P-type ATPase-like phosphatase (patS) of Methanocaldococcus jannaschii (strain ATCC 43067 / DSM 2661 / JAL-1 / JCM 10045 / NBRC 100440) (Methanococcus jannaschii).